A 728-amino-acid polypeptide reads, in one-letter code: 1,4-alpha-glucan branching enzyme GlgB (728 aa).

Aspartate 405 functions as the Nucleophile in the catalytic mechanism. Glutamate 458 (proton donor) is an active-site residue.

Belongs to the glycosyl hydrolase 13 family. GlgB subfamily. In terms of assembly, monomer.

It carries out the reaction Transfers a segment of a (1-&gt;4)-alpha-D-glucan chain to a primary hydroxy group in a similar glucan chain.. It participates in glycan biosynthesis; glycogen biosynthesis. In terms of biological role, catalyzes the formation of the alpha-1,6-glucosidic linkages in glycogen by scission of a 1,4-alpha-linked oligosaccharide from growing alpha-1,4-glucan chains and the subsequent attachment of the oligosaccharide to the alpha-1,6 position. The polypeptide is 1,4-alpha-glucan branching enzyme GlgB (Escherichia coli O139:H28 (strain E24377A / ETEC)).